The chain runs to 350 residues: Ribosomal RNA large subunit methyltransferase M (350 aa).

Residues 217–220 (APGG), D236, D256, and D272 each bind S-adenosyl-L-methionine. K301 acts as the Proton acceptor in catalysis.

It belongs to the class I-like SAM-binding methyltransferase superfamily. RNA methyltransferase RlmE family. RlmM subfamily. Monomer.

Its subcellular location is the cytoplasm. The catalysed reaction is cytidine(2498) in 23S rRNA + S-adenosyl-L-methionine = 2'-O-methylcytidine(2498) in 23S rRNA + S-adenosyl-L-homocysteine + H(+). In terms of biological role, catalyzes the 2'-O-methylation at nucleotide C2498 in 23S rRNA. The chain is Ribosomal RNA large subunit methyltransferase M from Cellvibrio japonicus (strain Ueda107) (Pseudomonas fluorescens subsp. cellulosa).